The sequence spans 153 residues: Endoribonuclease YbeY (153 aa).

3 residues coordinate Zn(2+): His-119, His-123, and His-129.

It belongs to the endoribonuclease YbeY family. Zn(2+) serves as cofactor.

The protein resides in the cytoplasm. In terms of biological role, single strand-specific metallo-endoribonuclease involved in late-stage 70S ribosome quality control and in maturation of the 3' terminus of the 16S rRNA. The polypeptide is Endoribonuclease YbeY (Desulforamulus reducens (strain ATCC BAA-1160 / DSM 100696 / MI-1) (Desulfotomaculum reducens)).